The following is a 207-amino-acid chain: MIGLINGQVQYLMAPTACVMTTSGVGYDIELPLPSFCQLRLNEQASIWTHFHVREDAQLLYGFIDRKERDVFRQLIKINGVGAKMALAMLSAMSAAELKMHVEQDSEDALTRIPGIGKKTAQRLLIELKDKLKNIEVDSSHLEFAMQPAPISAEGSIIAEVEGALISLGYKEREAQQAIKAAKSNGETFADTQSLLKATLQQFQSFK.

Residues 1-64 (MIGLINGQVQ…EDAQLLYGFI (64 aa)) are domain I. Positions 65-143 (DRKERDVFRQ…NIEVDSSHLE (79 aa)) are domain II. The tract at residues 144–152 (FAMQPAPIS) is flexible linker. The domain III stretch occupies residues 153–207 (AEGSIIAEVEGALISLGYKEREAQQAIKAAKSNGETFADTQSLLKATLQQFQSFK).

Belongs to the RuvA family. Homotetramer. Forms an RuvA(8)-RuvB(12)-Holliday junction (HJ) complex. HJ DNA is sandwiched between 2 RuvA tetramers; dsDNA enters through RuvA and exits via RuvB. An RuvB hexamer assembles on each DNA strand where it exits the tetramer. Each RuvB hexamer is contacted by two RuvA subunits (via domain III) on 2 adjacent RuvB subunits; this complex drives branch migration. In the full resolvosome a probable DNA-RuvA(4)-RuvB(12)-RuvC(2) complex forms which resolves the HJ.

It is found in the cytoplasm. Functionally, the RuvA-RuvB-RuvC complex processes Holliday junction (HJ) DNA during genetic recombination and DNA repair, while the RuvA-RuvB complex plays an important role in the rescue of blocked DNA replication forks via replication fork reversal (RFR). RuvA specifically binds to HJ cruciform DNA, conferring on it an open structure. The RuvB hexamer acts as an ATP-dependent pump, pulling dsDNA into and through the RuvAB complex. HJ branch migration allows RuvC to scan DNA until it finds its consensus sequence, where it cleaves and resolves the cruciform DNA. This is Holliday junction branch migration complex subunit RuvA from Psychrobacter cryohalolentis (strain ATCC BAA-1226 / DSM 17306 / VKM B-2378 / K5).